The sequence spans 202 residues: tRNA (pseudouridine(54)-N(1))-methyltransferase (202 aa).

The S-adenosyl-L-methionine site is built by L134 and G155.

It belongs to the methyltransferase superfamily. TrmY family. In terms of assembly, homodimer.

The protein resides in the cytoplasm. The enzyme catalyses pseudouridine(54) in tRNA + S-adenosyl-L-methionine = N(1)-methylpseudouridine(54) in tRNA + S-adenosyl-L-homocysteine + H(+). Specifically catalyzes the N1-methylation of pseudouridine at position 54 (Psi54) in tRNAs. The protein is tRNA (pseudouridine(54)-N(1))-methyltransferase of Thermococcus gammatolerans (strain DSM 15229 / JCM 11827 / EJ3).